We begin with the raw amino-acid sequence, 422 residues long: Histidinol dehydrogenase (422 aa).

NAD(+) is bound by residues Tyr123, Gln183, and Asn206. Positions 229, 251, and 254 each coordinate substrate. Residues Gln251 and His254 each contribute to the Zn(2+) site. Active-site proton acceptor residues include Glu320 and His321. Residues His321, Asp354, Glu408, and His413 each coordinate substrate. Asp354 lines the Zn(2+) pocket. His413 lines the Zn(2+) pocket.

Belongs to the histidinol dehydrogenase family. Zn(2+) serves as cofactor.

It carries out the reaction L-histidinol + 2 NAD(+) + H2O = L-histidine + 2 NADH + 3 H(+). It participates in amino-acid biosynthesis; L-histidine biosynthesis; L-histidine from 5-phospho-alpha-D-ribose 1-diphosphate: step 9/9. Its function is as follows. Catalyzes the sequential NAD-dependent oxidations of L-histidinol to L-histidinaldehyde and then to L-histidine. The polypeptide is Histidinol dehydrogenase (Natronomonas pharaonis (strain ATCC 35678 / DSM 2160 / CIP 103997 / JCM 8858 / NBRC 14720 / NCIMB 2260 / Gabara) (Halobacterium pharaonis)).